A 295-amino-acid polypeptide reads, in one-letter code: ATP-dependent (S)-NAD(P)H-hydrate dehydratase (295 aa).

The YjeF C-terminal domain occupies 9–289; that stretch reads LLERARNLVP…DQIHQVFDDL (281 aa). (6S)-NADPHX-binding positions include glycine 109 and 162–168; that span reads NAIEFCR. ATP is bound by residues 193–197 and 214–223; these read KGLND and GSGRRCGGQG. (6S)-NADPHX is bound at residue aspartate 224.

Belongs to the NnrD/CARKD family. Mg(2+) serves as cofactor.

The enzyme catalyses (6S)-NADHX + ATP = ADP + phosphate + NADH + H(+). It carries out the reaction (6S)-NADPHX + ATP = ADP + phosphate + NADPH + H(+). In terms of biological role, catalyzes the dehydration of the S-form of NAD(P)HX at the expense of ATP, which is converted to ADP. Together with NAD(P)HX epimerase, which catalyzes the epimerization of the S- and R-forms, the enzyme allows the repair of both epimers of NAD(P)HX, a damaged form of NAD(P)H that is a result of enzymatic or heat-dependent hydration. The chain is ATP-dependent (S)-NAD(P)H-hydrate dehydratase from Anopheles darlingi (Mosquito).